We begin with the raw amino-acid sequence, 316 residues long: Glutathione synthetase (316 aa).

Residues 125–310 (KLFTAWFSDL…ITGMLMDAIE (186 aa)) enclose the ATP-grasp domain. Position 151-207 (151-207 (WEKHSDIILKPLDGMGGASIFRVKEGDPNLGVIAETLTEHGTRYCMAQNYLPAIKDG)) interacts with ATP. Residues Glu-281 and Asn-283 each contribute to the Mg(2+) site.

This sequence belongs to the prokaryotic GSH synthase family. In terms of assembly, homotetramer. Mg(2+) serves as cofactor. The cofactor is Mn(2+).

It carries out the reaction gamma-L-glutamyl-L-cysteine + glycine + ATP = glutathione + ADP + phosphate + H(+). The protein operates within sulfur metabolism; glutathione biosynthesis; glutathione from L-cysteine and L-glutamate: step 2/2. Inhibited by 7,8-dihydrofolate, methotrexate and trimethoprim. The polypeptide is Glutathione synthetase (gshB) (Escherichia coli (strain K12)).